A 126-amino-acid polypeptide reads, in one-letter code: Fluoride-specific ion channel FluC 2 (126 aa).

Transmembrane regions (helical) follow at residues 11 to 31 (IFLI…LCEL), 34 to 54 (GQLG…MIMY), 66 to 86 (GKIA…TFAV), and 93 to 113 (FIPA…GVFF). Residues G76 and T79 each coordinate Na(+).

Belongs to the fluoride channel Fluc/FEX (TC 1.A.43) family.

Its subcellular location is the cell membrane. It catalyses the reaction fluoride(in) = fluoride(out). Na(+) is not transported, but it plays an essential structural role and its presence is essential for fluoride channel function. Fluoride-specific ion channel. Important for reducing fluoride concentration in the cell, thus reducing its toxicity. This Methanosarcina acetivorans (strain ATCC 35395 / DSM 2834 / JCM 12185 / C2A) protein is Fluoride-specific ion channel FluC 2.